The chain runs to 264 residues: Thymidylate synthase (264 aa).

Arg-21 contacts dUMP. Residue His-51 coordinates (6R)-5,10-methylene-5,6,7,8-tetrahydrofolate. 126 to 127 (RR) contributes to the dUMP binding site. Residue Cys-146 is the Nucleophile of the active site. Residues 166-169 (RSCD), Asn-177, and 207-209 (HLY) each bind dUMP. Asp-169 contributes to the (6R)-5,10-methylene-5,6,7,8-tetrahydrofolate binding site. Residue Ala-263 coordinates (6R)-5,10-methylene-5,6,7,8-tetrahydrofolate.

It belongs to the thymidylate synthase family. Bacterial-type ThyA subfamily. In terms of assembly, homodimer.

The protein localises to the cytoplasm. The catalysed reaction is dUMP + (6R)-5,10-methylene-5,6,7,8-tetrahydrofolate = 7,8-dihydrofolate + dTMP. The protein operates within pyrimidine metabolism; dTTP biosynthesis. Functionally, catalyzes the reductive methylation of 2'-deoxyuridine-5'-monophosphate (dUMP) to 2'-deoxythymidine-5'-monophosphate (dTMP) while utilizing 5,10-methylenetetrahydrofolate (mTHF) as the methyl donor and reductant in the reaction, yielding dihydrofolate (DHF) as a by-product. This enzymatic reaction provides an intracellular de novo source of dTMP, an essential precursor for DNA biosynthesis. This is Thymidylate synthase from Shewanella denitrificans (strain OS217 / ATCC BAA-1090 / DSM 15013).